Reading from the N-terminus, the 101-residue chain is MRPNFSKGLLPAIVINEETKEVLMLAYMNEEAYEKTLKTKKTWFYSRSRQTLWNKGATSGHVQHVKSLYLDCDQDAIVITVNQVGVACHTGEKTCFHHKII.

Residue Asp71 participates in Mg(2+) binding. Cys72 serves as a coordination point for Zn(2+). Positions 73 and 75 each coordinate Mg(2+). Positions 88 and 95 each coordinate Zn(2+).

Belongs to the PRA-CH family. As to quaternary structure, homodimer. Requires Mg(2+) as cofactor. Zn(2+) serves as cofactor.

It is found in the cytoplasm. It carries out the reaction 1-(5-phospho-beta-D-ribosyl)-5'-AMP + H2O = 1-(5-phospho-beta-D-ribosyl)-5-[(5-phospho-beta-D-ribosylamino)methylideneamino]imidazole-4-carboxamide. It participates in amino-acid biosynthesis; L-histidine biosynthesis; L-histidine from 5-phospho-alpha-D-ribose 1-diphosphate: step 3/9. In terms of biological role, catalyzes the hydrolysis of the adenine ring of phosphoribosyl-AMP. This Bacillus cytotoxicus (strain DSM 22905 / CIP 110041 / 391-98 / NVH 391-98) protein is Phosphoribosyl-AMP cyclohydrolase.